A 525-amino-acid polypeptide reads, in one-letter code: GMP synthase [glutamine-hydrolyzing] (525 aa).

The Glutamine amidotransferase type-1 domain occupies 9–207 (RILILDFGSQ…VLDICQCEAL (199 aa)). Residue Cys86 is the Nucleophile of the active site. Active-site residues include His181 and Glu183. One can recognise a GMPS ATP-PPase domain in the interval 208–400 (WTPAKIIDDA…LGLPYNMLYR (193 aa)). 235–241 (SGGVDSS) contacts ATP.

Homodimer.

It catalyses the reaction XMP + L-glutamine + ATP + H2O = GMP + L-glutamate + AMP + diphosphate + 2 H(+). The protein operates within purine metabolism; GMP biosynthesis; GMP from XMP (L-Gln route): step 1/1. In terms of biological role, catalyzes the synthesis of GMP from XMP. This is GMP synthase [glutamine-hydrolyzing] from Pectobacterium atrosepticum (strain SCRI 1043 / ATCC BAA-672) (Erwinia carotovora subsp. atroseptica).